A 108-amino-acid polypeptide reads, in one-letter code: Nucleoid-associated protein BH02310 (108 aa).

It belongs to the YbaB/EbfC family. In terms of assembly, homodimer.

The protein resides in the cytoplasm. Its subcellular location is the nucleoid. Its function is as follows. Binds to DNA and alters its conformation. May be involved in regulation of gene expression, nucleoid organization and DNA protection. In Bartonella henselae (strain ATCC 49882 / DSM 28221 / CCUG 30454 / Houston 1) (Rochalimaea henselae), this protein is Nucleoid-associated protein BH02310.